Consider the following 50-residue polypeptide: U37-theraphotoxin-Cg1b (50 aa).

Residues 1-19 (MRVLLIIAGLALLSVVCYT) form the signal peptide.

It belongs to the neurotoxin 10 (Hwtx-1) family. 67 (Jztx-67) subfamily. In terms of tissue distribution, expressed by the venom gland.

The protein resides in the secreted. This chain is U37-theraphotoxin-Cg1b, found in Chilobrachys guangxiensis (Chinese earth tiger tarantula).